Consider the following 253-residue polypeptide: Probable transcriptional regulatory protein SynRCC307_1833 (253 aa).

It belongs to the TACO1 family.

It is found in the cytoplasm. The sequence is that of Probable transcriptional regulatory protein SynRCC307_1833 from Synechococcus sp. (strain RCC307).